Here is a 358-residue protein sequence, read N- to C-terminus: C-X-C chemokine receptor type 4-B (358 aa).

The interval 1–25 is important for chemokine binding and signaling; it reads MDGFSGGIDINIFDGNSTENGSGDF. Residues 1–44 lie on the Extracellular side of the membrane; it reads MDGFSGGIDINIFDGNSTENGSGDFEDFIEPCFMQENSDFNRIF. N-linked (GlcNAc...) asparagine glycans are attached at residues asparagine 16 and asparagine 20. Cystine bridges form between cysteine 32–cysteine 281 and cysteine 113–cysteine 190. Residues 45-67 traverse the membrane as a helical segment; the sequence is LPTIYSFIFLLGIIGNGLVVVVM. The Cytoplasmic portion of the chain corresponds to 68–81; that stretch reads GYQKKSRTMTDKYR. Residues 82–103 form a helical membrane-spanning segment; the sequence is LHLSVADLLFVFTLPFWSVDAA. The tract at residues 98–101 is chemokine binding; sequence WSVD. Residues 104-114 are Extracellular-facing; it reads IGWYFKEFLCK. The helical transmembrane segment at 115–134 threads the bilayer; that stretch reads AVHVIYTVNLYSSVLILAFI. A chemokine binding region spans residues 117–121; it reads HVIYT. At 135-158 the chain is on the cytoplasmic side; that stretch reads SLDRYLAIVHATNSQGSRKMLADK. Residues 139–151 are involved in dimerization; when bound to chemokine; it reads YLAIVHATNSQGS. The chain crosses the membrane as a helical span at residues 159–178; the sequence is VVYAGVWLPALLLTVPDLVF. The Extracellular segment spans residues 179–202; the sequence is ASVSNENGQFVCDRIYPIDNRETW. The chemokine binding, important for signaling stretch occupies residues 190–194; that stretch reads CDRIY. The chain crosses the membrane as a helical span at residues 203-223; it reads TVGFRFLHITVGLILPGLIIL. The Cytoplasmic portion of the chain corresponds to 224-248; the sequence is VCYCVIISKLSHSKGHQKRKALKTT. A helical transmembrane segment spans residues 249–268; sequence VILILAFFACWLPYYVCLTT. Topologically, residues 269-289 are extracellular; the sequence is DTFMMLGLVKADCIWENTLHK. Residues 290–309 form a helical membrane-spanning segment; the sequence is AISITEALAFFHCCLNPILY. Residues 310–358 lie on the Cytoplasmic side of the membrane; sequence AFLGAKFKKSAQNAFTSVSRGSSLKILSKKRAGLSSVSTESESSSFHSS. Residues 338 to 358 form a disordered region; it reads KKRAGLSSVSTESESSSFHSS. Over residues 344-358 the composition is skewed to low complexity; it reads SSVSTESESSSFHSS.

The protein belongs to the G-protein coupled receptor 1 family. In terms of assembly, monomer. Can form dimers. In terms of processing, sulfation is required for efficient binding of cxcl12/sdf-1alpha and promotes its dimerization. Post-translationally, O- and N-glycosylated.

The protein resides in the cell membrane. It is found in the cytoplasm. It localises to the nucleus. Its subcellular location is the early endosome. The protein localises to the late endosome. The protein resides in the lysosome. Receptor for the C-X-C chemokine cxcl12/sdf-1. Transduces a signal by increasing the intracellular level of calcium ions. Signaling with cxcl12/sdf-1 mediates the directional movement of mesodermal cells during gastrulation. May play a role in the migration of embryonic presumptive primordial germ cells (pPGCs). May also be involved in regulating migration of hematopoietic stem cells into the larval liver. In Xenopus laevis (African clawed frog), this protein is C-X-C chemokine receptor type 4-B (cxcr4-b).